Consider the following 177-residue polypeptide: Eggshell protein (177 aa).

An N-terminal signal peptide occupies residues 1–18 (MKQSLTLVFLVAIGYATA). A run of 5 repeats spans residues 25–41 (YSGG…CDSG), 42–59 (YGDS…CGGG), 60–75 (YGGG…DCGN), 76–91 (YGGG…DCGN), and 92–112 (YGGG…CGGG). The tract at residues 25 to 112 (YSGGYGGGCY…GCSGGNCGGG (88 aa)) is 5 X approximate tandem repeats. The segment covering 149–166 (GSGKGKGGGKGGKGGKGG) has biased composition (gly residues). Positions 149 to 177 (GSGKGKGGGKGGKGGKGGTYKPSHYGGGY) are disordered.

This Schistosoma mansoni (Blood fluke) protein is Eggshell protein.